Here is a 444-residue protein sequence, read N- to C-terminus: Glutamate--tRNA ligase 1 (444 aa).

The 'HIGH' region motif lies at 8 to 18 (PSPTGFLHVGN). The 'KMSKS' region signature appears at 239–243 (KISKR). Lys-242 contacts ATP.

The protein belongs to the class-I aminoacyl-tRNA synthetase family. Glutamate--tRNA ligase type 1 subfamily. As to quaternary structure, monomer.

The protein resides in the cytoplasm. It carries out the reaction tRNA(Glu) + L-glutamate + ATP = L-glutamyl-tRNA(Glu) + AMP + diphosphate. Catalyzes the attachment of glutamate to tRNA(Glu) in a two-step reaction: glutamate is first activated by ATP to form Glu-AMP and then transferred to the acceptor end of tRNA(Glu). This chain is Glutamate--tRNA ligase 1, found in Zymomonas mobilis subsp. mobilis (strain ATCC 31821 / ZM4 / CP4).